The sequence spans 1706 residues: Probable ATP-dependent RNA helicase DDX60-like (1706 aa).

The disordered stretch occupies residues 545-580 (RPKEDSSGASGEILQNTKPHQITKKSKKKSFLKEDQ). A compositionally biased stretch (polar residues) spans 551–564 (SGASGEILQNTKPH). Over residues 565 to 574 (QITKKSKKKS) the composition is skewed to basic residues. Positions 752–919 (LDVVDKNESA…WLQSVKQYWK (168 aa)) constitute a Helicase ATP-binding domain. 765–772 (APTSSGKT) provides a ligand contact to ATP. The DEAH box signature appears at 869–872 (DEVH). The Helicase C-terminal domain maps to 1205–1354 (DVKALHTEIT…QFPLSITLVL (150 aa)).

It belongs to the helicase family.

It carries out the reaction ATP + H2O = ADP + phosphate + H(+). The protein is Probable ATP-dependent RNA helicase DDX60-like of Homo sapiens (Human).